A 437-amino-acid polypeptide reads, in one-letter code: Trigger factor (437 aa).

The PPIase FKBP-type domain occupies 164–249; that stretch reads GDRVTIDFAG…LKSVEAPKLP (86 aa).

This sequence belongs to the FKBP-type PPIase family. Tig subfamily.

It localises to the cytoplasm. The enzyme catalyses [protein]-peptidylproline (omega=180) = [protein]-peptidylproline (omega=0). Involved in protein export. Acts as a chaperone by maintaining the newly synthesized protein in an open conformation. Functions as a peptidyl-prolyl cis-trans isomerase. This is Trigger factor from Azoarcus sp. (strain BH72).